Here is a 267-residue protein sequence, read N- to C-terminus: Eukaryotic translation initiation factor 3 subunit K (267 aa).

In terms of domain architecture, PCI spans 46–233; that stretch reads FDCYANLALL…EARSEVKSER (188 aa).

Belongs to the eIF-3 subunit K family. As to quaternary structure, component of the eukaryotic translation initiation factor 3 (eIF-3) complex.

Its subcellular location is the cytoplasm. Functionally, component of the eukaryotic translation initiation factor 3 (eIF-3) complex, which is involved in protein synthesis of a specialized repertoire of mRNAs and, together with other initiation factors, stimulates binding of mRNA and methionyl-tRNAi to the 40S ribosome. The eIF-3 complex specifically targets and initiates translation of a subset of mRNAs involved in cell proliferation. The chain is Eukaryotic translation initiation factor 3 subunit K from Aspergillus niger (strain ATCC MYA-4892 / CBS 513.88 / FGSC A1513).